The chain runs to 790 residues: von Willebrand factor A domain-containing protein 2 (790 aa).

The N-terminal stretch at 1 to 22 is a signal peptide; it reads MRLPWVNGILAFLSSQVLQCLC. The VWFA 1 domain maps to 50-221; that stretch reads DILILLDGSN…DAVNGLATSL (172 aa). Residues 295–332 form the EGF-like 1 domain; the sequence is PDPCDSQPCKNGGTCIAEGQDKYHCVCPAGFGGDTECA. 3 disulfide bridges follow: C298–C309, C303–C319, and C321–C331. VWFA domains lie at 342–518 and 532–702; these read DLLF…QKRI and DLAF…EDSV. Residues 713–748 enclose the EGF-like 2 domain; that stretch reads PVNLCKPNPCMNDGVCILRQGSYRCDCRGWDGPHCE. 3 disulfide bridges follow: C717–C728, C722–C737, and C739–C747. The interval 758–790 is disordered; sequence WPQGLHSRSRQQRHSRKRRLKSVSGSRSSRKKP. Basic residues predominate over residues 764–778; the sequence is SRSRQQRHSRKRRLK.

In terms of assembly, forms monomers and multimers.

The protein localises to the secreted. This chain is von Willebrand factor A domain-containing protein 2 (vwa2), found in Xenopus laevis (African clawed frog).